The sequence spans 317 residues: MIREKTNKISIIGAGFVGSTTAFALMQDGLASEIVIVDINKDKAHAEAMDLAQGAAFVKSVDIKSGDYADTKDSDIVIITAGVGPKPGETRLDIINKNLKIFQSIVPEVVKYSPNSILLVVSNPVDILTYITYKLSGFPKERVIGSGTVLDTSRLKYMLSEHFDIDARNVHTYIIGEHGDSEITAWSLTNIAGANVEEYCKTVCANCDGSFKKELPEKVKNAAYEIINSKGYTNYAVALAVTRIVEAILRDENAILTVSSLFEGQYGIDNVYLAMPTIVDRSGARQILDVPISNEEKENLIKSAEILKGHIANSELD.

NAD(+) contacts are provided by residues Val17, Asp38, Lys43, Tyr68, and Gly82–Val83. Substrate is bound at residue Arg91. Residues Ser104, Val121–Asn123, and Ser146 each bind NAD(+). Asn123–Asp126 lines the substrate pocket. Position 151 to 154 (Asp151 to Arg154) interacts with substrate. 2 residues coordinate beta-D-fructose 1,6-bisphosphate: Lys156 and His171. The active-site Proton acceptor is the His178. Tyr224 carries the phosphotyrosine modification. Thr233 contacts substrate.

This sequence belongs to the LDH/MDH superfamily. LDH family. As to quaternary structure, homotetramer.

It is found in the cytoplasm. The catalysed reaction is (S)-lactate + NAD(+) = pyruvate + NADH + H(+). The protein operates within fermentation; pyruvate fermentation to lactate; (S)-lactate from pyruvate: step 1/1. With respect to regulation, allosterically activated by fructose 1,6-bisphosphate (FBP). Its function is as follows. Catalyzes the conversion of lactate to pyruvate. The chain is L-lactate dehydrogenase from Clostridium perfringens (strain ATCC 13124 / DSM 756 / JCM 1290 / NCIMB 6125 / NCTC 8237 / Type A).